Consider the following 347-residue polypeptide: Heat-inducible transcription repressor HrcA (347 aa).

The protein belongs to the HrcA family.

In terms of biological role, negative regulator of class I heat shock genes (grpE-dnaK-dnaJ and groELS operons). Prevents heat-shock induction of these operons. This Rhodococcus erythropolis (strain PR4 / NBRC 100887) protein is Heat-inducible transcription repressor HrcA.